A 383-amino-acid polypeptide reads, in one-letter code: Histidine decarboxylase (383 aa).

A substrate-binding site is contributed by histidine 120. Lysine 233 is modified (N6-(pyridoxal phosphate)lysine).

It belongs to the group II decarboxylase family. In terms of assembly, homotetramer. Pyridoxal 5'-phosphate is required as a cofactor.

The enzyme catalyses L-histidine + H(+) = histamine + CO2. This chain is Histidine decarboxylase, found in Acinetobacter baumannii (strain ACICU).